We begin with the raw amino-acid sequence, 313 residues long: Olfactory receptor 1M1 (313 aa).

At 1–25 the chain is on the extracellular side; sequence MEPRNQTSASQFILLGLSEKPEQET. N-linked (GlcNAc...) asparagine glycosylation occurs at Asn5. A helical transmembrane segment spans residues 26-49; that stretch reads LLFSLFFCMYLVMVVGNLLIILAI. Residues 50 to 57 are Cytoplasmic-facing; sequence SIDSHLHT. The helical transmembrane segment at 58–79 threads the bilayer; it reads PMYFFLANLSLVDFCLATNTIP. Residues 80 to 100 lie on the Extracellular side of the membrane; that stretch reads KMLVSLQTGSKAISYPCCLIQ. The cysteines at positions 97 and 189 are disulfide-linked. A helical transmembrane segment spans residues 101 to 120; that stretch reads MYFFHFFGIVDSVIIAMMAY. At 121–139 the chain is on the cytoplasmic side; the sequence is DRFVAICHPLHYAKIMSLR. The chain crosses the membrane as a helical span at residues 140-158; it reads LCRLLVGALWAFSCFISLT. Over 159 to 196 the chain is Extracellular; sequence HILLMARLVFCGSHEVPHYFCDLTPILRLSCTDTSVNR. Residues 197–219 traverse the membrane as a helical segment; sequence IFILIVAGMVIATPFVCILASYA. Residues 220 to 236 lie on the Cytoplasmic side of the membrane; it reads RILVAIMKVPSAGGRKK. A helical membrane pass occupies residues 237–259; it reads AFSTCSSHLSVVALFYGTTIGVY. Over 260 to 272 the chain is Extracellular; it reads LCPSSVLTTVKEK. Residues 273–292 traverse the membrane as a helical segment; that stretch reads ASAVMYTAVTPMLNPFIYSL. The Cytoplasmic portion of the chain corresponds to 293-313; sequence RNRDLKGALRKLVNRKITSSS.

This sequence belongs to the G-protein coupled receptor 1 family.

The protein localises to the cell membrane. Its function is as follows. Odorant receptor. The sequence is that of Olfactory receptor 1M1 from Homo sapiens (Human).